A 363-amino-acid chain; its full sequence is Aminomethyltransferase (363 aa).

This sequence belongs to the GcvT family. In terms of assembly, the glycine cleavage system is composed of four proteins: P, T, L and H.

It catalyses the reaction N(6)-[(R)-S(8)-aminomethyldihydrolipoyl]-L-lysyl-[protein] + (6S)-5,6,7,8-tetrahydrofolate = N(6)-[(R)-dihydrolipoyl]-L-lysyl-[protein] + (6R)-5,10-methylene-5,6,7,8-tetrahydrofolate + NH4(+). Its function is as follows. The glycine cleavage system catalyzes the degradation of glycine. This is Aminomethyltransferase from Prosthecochloris aestuarii (strain DSM 271 / SK 413).